The following is a 298-amino-acid chain: ADP/ATP translocase 1 (298 aa).

The Mitochondrial intermembrane segment spans residues 1–7 (MSDQALS). Ser2 carries the N-acetylserine modification. The Solcar 1 repeat unit spans residues 6 to 98 (LSFLKDFLAG…FAFKDKYKQI (93 aa)). Phosphoserine is present on Ser7. The chain crosses the membrane as a helical span at residues 8–37 (FLKDFLAGGVAAAISKTAVAPIERVKLLLQ). The Mitochondrial matrix portion of the chain corresponds to 38–74 (VQHASKQISAEKQYKGIIDCVVRIPKEQGFLSFWRGN). Residue Lys52 is modified to N6,N6,N6-trimethyllysine. Position 52 is an N6-methyllysine (Lys52). The helical transmembrane segment at 75 to 99 (LANVIRYFPTQALNFAFKDKYKQIF) threads the bilayer. The ADP site is built by Arg80 and Lys92. Over 100–109 (LGGVDRHKQF) the chain is Mitochondrial intermembrane. Residues 110–130 (WRYFAGNLASGGAAGATSLCF) traverse the membrane as a helical segment. Solcar repeat units lie at residues 111 to 201 (RYFA…AKGM) and 212 to 297 (VSWM…IKKF). The Mitochondrial matrix segment spans residues 131–178 (VYPLDFARTRLAADVGKGAAQREFTGLGNCITKIFKSDGLRGLYQGFN). Lys147 carries the post-translational modification N6-succinyllysine. Cys160 is subject to S-nitrosocysteine. A helical transmembrane segment spans residues 179–199 (VSVQGIIIYRAAYFGVYDTAK). Over 200–210 (GMLPDPKNVHI) the chain is Mitochondrial intermembrane. Residues 211 to 231 (IVSWMIAQTVTAVAGLVSYPF) form a helical membrane-spanning segment. Residues 232–273 (DTVRRRMMMQSGRKGADIMYTGTVDCWRKIAKDEGPKAFFKG) are Mitochondrial matrix-facing. Arg235 lines the ADP pocket. Positions 235–240 (RRRMMM) are important for transport activity. The short motif at 235-240 (RRRMMM) is the Nucleotide carrier signature motif element. N6-succinyllysine is present on residues Lys245 and Lys272. The chain crosses the membrane as a helical span at residues 274–291 (AWSNVLRGMGGAFVLVLY). The Mitochondrial intermembrane segment spans residues 292–298 (DEIKKFV).

This sequence belongs to the mitochondrial carrier (TC 2.A.29) family. As to quaternary structure, monomer. Found in a complex with ARL2, ARL2BP and SLC25A4/ANT1. Interacts with ARL2BP. Interacts with TIMM44; leading to inhibit the presequence translocase TIMM23, thereby promoting stabilization of PINK1. Under cell death induction, transglutaminated by TGM2. Transglutamination leads to formation of covalent cross-links between a glutamine and the epsilon-amino group of a lysine residue, forming polymers. Detected in heart muscle (at protein level). Detected in heart.

The protein localises to the mitochondrion inner membrane. The protein resides in the membrane. It carries out the reaction ADP(in) + ATP(out) = ADP(out) + ATP(in). The catalysed reaction is H(+)(in) = H(+)(out). With respect to regulation, the matrix-open state (m-state) is inhibited by the membrane-permeable bongkrekic acid (BKA). The cytoplasmic-open state (c-state) is inhibited by the membrane-impermeable toxic inhibitor carboxyatractyloside (CATR). Proton transporter activity is inhibited by ADP:ATP antiporter activity. ADP:ATP antiporter that mediates import of ADP into the mitochondrial matrix for ATP synthesis, and export of ATP out to fuel the cell. Cycles between the cytoplasmic-open state (c-state) and the matrix-open state (m-state): operates by the alternating access mechanism with a single substrate-binding site intermittently exposed to either the cytosolic (c-state) or matrix (m-state) side of the inner mitochondrial membrane. In addition to its ADP:ATP antiporter activity, also involved in mitochondrial uncoupling and mitochondrial permeability transition pore (mPTP) activity. Plays a role in mitochondrial uncoupling by acting as a proton transporter: proton transport uncouples the proton flows via the electron transport chain and ATP synthase to reduce the efficiency of ATP production and cause mitochondrial thermogenesis. Proton transporter activity is inhibited by ADP:ATP antiporter activity, suggesting that SLC25A4/ANT1 acts as a master regulator of mitochondrial energy output by maintaining a delicate balance between ATP production (ADP:ATP antiporter activity) and thermogenesis (proton transporter activity). Proton transporter activity requires free fatty acids as cofactor, but does not transport it. Probably mediates mitochondrial uncoupling in tissues that do not express UCP1. Also plays a key role in mPTP opening, a non-specific pore that enables free passage of the mitochondrial membranes to solutes of up to 1.5 kDa, and which contributes to cell death. It is however unclear if SLC25A4/ANT1 constitutes a pore-forming component of mPTP or regulates it. Acts as a regulator of mitophagy independently of ADP:ATP antiporter activity: promotes mitophagy via interaction with TIMM44, leading to inhibit the presequence translocase TIMM23, thereby promoting stabilization of PINK1. The protein is ADP/ATP translocase 1 of Bos taurus (Bovine).